A 458-amino-acid chain; its full sequence is UDP-N-acetylmuramoylalanine--D-glutamate ligase (458 aa).

124–130 (GSDGKTT) contributes to the ATP binding site.

Belongs to the MurCDEF family.

It is found in the cytoplasm. It carries out the reaction UDP-N-acetyl-alpha-D-muramoyl-L-alanine + D-glutamate + ATP = UDP-N-acetyl-alpha-D-muramoyl-L-alanyl-D-glutamate + ADP + phosphate + H(+). It participates in cell wall biogenesis; peptidoglycan biosynthesis. Functionally, cell wall formation. Catalyzes the addition of glutamate to the nucleotide precursor UDP-N-acetylmuramoyl-L-alanine (UMA). This chain is UDP-N-acetylmuramoylalanine--D-glutamate ligase, found in Clostridium botulinum (strain Langeland / NCTC 10281 / Type F).